The chain runs to 147 residues: Putative acetyltransferase BSU40680 (147 aa).

An N-acetyltransferase domain is found at 1–144 (MNVKKITSEQ…PHVLMTKQDD (144 aa)). CoA-binding positions include 74–76 (ICI) and 115–117 (GFY).

The protein belongs to the UPF0039 (ElaA) family.

Its function is as follows. Could catalyze the transfer of an acetyl group from acetyl coenzyme A (AcCoA) to an acceptor substrate and release both CoA and the acetylated product. This Bacillus subtilis (strain 168) protein is Putative acetyltransferase BSU40680 (yybD).